The primary structure comprises 1035 residues: Retinoblastoma-related protein (1035 aa).

A disordered region spans residues 403–426; it reads ITSPLSPHRSPASHANGIPGSANS. A domain A region spans residues 431–632; the sequence is TPVSTAMTTA…EKGSSLYNSL (202 aa). A pocket region spans residues 431–885; it reads TPVSTAMTTA…NEIFIPAAKP (455 aa). The segment at 633-753 is spacer; the sequence is TVARPALSAE…PGGGGETCAE (121 aa). Disordered regions lie at residues 674–697 and 721–748; these read PSLQ…PKRP and GNLK…GGGG. A domain B region spans residues 754–885; sequence TGINVFFTKI…NEIFIPAAKP (132 aa).

Belongs to the retinoblastoma protein (RB) family.

The protein localises to the nucleus. In terms of biological role, regulator of biological processes that recruits a histone deacetylase to control gene transcription. May play a role in the entry into mitosis, negatively regulating the cell proliferation. Formation of stable complexes with geminiviridae replication-associated proteins may create a cellular environment which favors viral DNA replication. The polypeptide is Retinoblastoma-related protein (RBL901) (Populus trichocarpa (Western balsam poplar)).